Reading from the N-terminus, the 76-residue chain is UPF0291 protein BPUM_1689 (76 aa).

Disordered stretches follow at residues 1–31 (MISKNQLARINELSKKSKETGLSDAEKTEQK) and 56–76 (DPEGNDVTPEKLKRERDQNLH). 2 stretches are compositionally biased toward basic and acidic residues: residues 12-31 (ELSKKSKETGLSDAEKTEQK) and 63-76 (TPEKLKRERDQNLH).

Belongs to the UPF0291 family.

The protein localises to the cytoplasm. In Bacillus pumilus (strain SAFR-032), this protein is UPF0291 protein BPUM_1689.